The primary structure comprises 198 residues: Glycerol-3-phosphate acyltransferase (198 aa).

The next 4 membrane-spanning stretches (helical) occupy residues 4-24, 71-91, 113-133, and 147-167; these read TYLL…LVVG, LPMI…AVLG, LLCY…TLLF, and VVAV…AMCL.

This sequence belongs to the PlsY family. Probably interacts with PlsX.

It localises to the cell membrane. It catalyses the reaction an acyl phosphate + sn-glycerol 3-phosphate = a 1-acyl-sn-glycero-3-phosphate + phosphate. The protein operates within lipid metabolism; phospholipid metabolism. Its function is as follows. Catalyzes the transfer of an acyl group from acyl-phosphate (acyl-PO(4)) to glycerol-3-phosphate (G3P) to form lysophosphatidic acid (LPA). This enzyme utilizes acyl-phosphate as fatty acyl donor, but not acyl-CoA or acyl-ACP. The polypeptide is Glycerol-3-phosphate acyltransferase (Bacillus cereus (strain G9842)).